The primary structure comprises 564 residues: MSFSSGKFLFVFLFFFFFKNTSCSNQRKYITKQQTMSKDKKEHKDKKRKHDNEDVEIADSKKQRKLEKQEKKDKKDKKDKKEKKEKKEKKHKKEKKHKDSESSPVEPAANDSSSSTNYTQSSKLSSVSQSDIDKFLSDNEITVEDPSSSSLRPILSFDQVQLTSAITSKLSKFDKPTPIQSVSWPFLLSGKDVIGVAETGSGKTFAFGVPAINNIITTGNTKTLSVLCISPTRELALQIYDNLIELTADSGVNCVAVYGGVSKDDQIRKIKTANVVVATPGRLVDLINDGAINLGKVNYLVLDEADRMLEKGFEEDIKTIISNTSNSERQTLMFTATWPKEVRELANNFMNSPVKVTVGDRDELSANKRITQVVEVINKFDKEKKLIQLLRKYNANESSDNKILIFALYKKEASRIENFLKRNRFSVAAIHGDLSQQQRTAALSAFKSGQSNLLLATDVAARGLDIPNVKVVINLTFPLTIEDYVHRIGRTGRAGAKGTAHTLFTEDEKHLSGALCNILRGANQPVPEELLKFGGHTKKKAHSVYGAFYKDVDMTKTAKKIKFD.

The interval 31–125 is disordered; it reads TKQQTMSKDK…TNYTQSSKLS (95 aa). Basic and acidic residues predominate over residues 58–73; that stretch reads ADSKKQRKLEKQEKKD. The segment covering 74 to 96 has biased composition (basic residues); that stretch reads KKDKKDKKEKKEKKEKKHKKEKK. The span at 112 to 125 shows a compositional bias: low complexity; the sequence is SSSSTNYTQSSKLS. Residues 155 to 181 carry the Q motif motif; that stretch reads LSFDQVQLTSAITSKLSKFDKPTPIQS. Positions 184-356 constitute a Helicase ATP-binding domain; sequence WPFLLSGKDV…NNFMNSPVKV (173 aa). An ATP-binding site is contributed by 197–204; it reads AETGSGKT. Residues 303-306 carry the DEAD box motif; it reads DEAD. The Helicase C-terminal domain occupies 385–534; it reads KLIQLLRKYN…PVPEELLKFG (150 aa).

It belongs to the DEAD box helicase family. DDX5/DBP2 subfamily.

It localises to the nucleus. It is found in the nucleolus. The enzyme catalyses ATP + H2O = ADP + phosphate + H(+). Functionally, ATP-dependent RNA helicase required for 60S ribosomal subunit synthesis. Involved in efficient pre-rRNA processing, predominantly at site A3, which is necessary for the normal formation of 25S and 5.8S rRNAs. This is ATP-dependent RNA helicase DBP3 (DBP3) from Candida albicans (strain SC5314 / ATCC MYA-2876) (Yeast).